Reading from the N-terminus, the 493-residue chain is GTPase Der (493 aa).

EngA-type G domains are found at residues 3-166 (PVVA…AEAL) and 206-379 (IKLA…KSAT). Residues 9–16 (GRPNVGKS), 56–60 (DTGGI), 118–121 (NKVD), 212–219 (GRPNVGKS), 259–263 (DTAGV), and 324–327 (NKWD) contribute to the GTP site. The region spanning 380–464 (TRVGTSVLTR…PIRIQFQNSE (85 aa)) is the KH-like domain.

This sequence belongs to the TRAFAC class TrmE-Era-EngA-EngB-Septin-like GTPase superfamily. EngA (Der) GTPase family. In terms of assembly, associates with the 50S ribosomal subunit.

In terms of biological role, GTPase that plays an essential role in the late steps of ribosome biogenesis. The polypeptide is GTPase Der (Vibrio atlanticus (strain LGP32) (Vibrio splendidus (strain Mel32))).